The following is a 344-amino-acid chain: Phosphoribosylformylglycinamidine cyclo-ligase (344 aa).

Belongs to the AIR synthase family.

Its subcellular location is the cytoplasm. It catalyses the reaction 2-formamido-N(1)-(5-O-phospho-beta-D-ribosyl)acetamidine + ATP = 5-amino-1-(5-phospho-beta-D-ribosyl)imidazole + ADP + phosphate + H(+). Its pathway is purine metabolism; IMP biosynthesis via de novo pathway; 5-amino-1-(5-phospho-D-ribosyl)imidazole from N(2)-formyl-N(1)-(5-phospho-D-ribosyl)glycinamide: step 2/2. This chain is Phosphoribosylformylglycinamidine cyclo-ligase, found in Haemophilus influenzae (strain PittEE).